The sequence spans 200 residues: uncharacterized protein (200 aa).

Composition is skewed to low complexity over residues 1–13 and 28–44; these read MTSA…AAES and PSPA…AGPR. Disordered regions lie at residues 1 to 116 and 137 to 200; these read MTSA…GGPG and LPRD…SSFF. Basic residues predominate over residues 88 to 102; the sequence is RCGRPRRRDPRRRRT. Residues 189-200 show a composition bias toward low complexity; the sequence is PSSSSGLLSSFF.

This is an uncharacterized protein from Homo sapiens (Human).